The primary structure comprises 92 residues: Sugar fermentation stimulation protein B (92 aa).

Residues 50–69 constitute a DNA-binding region (H-T-H motif); sequence EMIIAKALGTDPWVIWPSRY.

Belongs to the ner transcriptional regulatory family.

Functionally, this protein is involved in positive regulation of the metabolism of sugars. This is Sugar fermentation stimulation protein B (sfsB) from Escherichia coli O157:H7.